We begin with the raw amino-acid sequence, 302 residues long: Probable alpha-L-glutamate ligase (302 aa).

Residues 104 to 287 form the ATP-grasp domain; that stretch reads LQLLSRKGVG…VAGLLIKFIE (184 aa). ATP is bound by residues Lys-141, 178–179, Asp-187, and 211–213; these read EY and RSN. 3 residues coordinate Mg(2+): Asp-248, Glu-260, and Asn-262. Residues Asp-248, Glu-260, and Asn-262 each coordinate Mn(2+).

The protein belongs to the RimK family. Mg(2+) is required as a cofactor. Mn(2+) serves as cofactor.

This is Probable alpha-L-glutamate ligase from Alcanivorax borkumensis (strain ATCC 700651 / DSM 11573 / NCIMB 13689 / SK2).